The following is a 227-amino-acid chain: Enolase-phosphatase E1 (227 aa).

This sequence belongs to the HAD-like hydrolase superfamily. MasA/MtnC family. As to quaternary structure, monomer. It depends on Mg(2+) as a cofactor.

The enzyme catalyses 5-methylsulfanyl-2,3-dioxopentyl phosphate + H2O = 1,2-dihydroxy-5-(methylsulfanyl)pent-1-en-3-one + phosphate. It functions in the pathway amino-acid biosynthesis; L-methionine biosynthesis via salvage pathway; L-methionine from S-methyl-5-thio-alpha-D-ribose 1-phosphate: step 3/6. The protein operates within amino-acid biosynthesis; L-methionine biosynthesis via salvage pathway; L-methionine from S-methyl-5-thio-alpha-D-ribose 1-phosphate: step 4/6. Its function is as follows. Bifunctional enzyme that catalyzes the enolization of 2,3-diketo-5-methylthiopentyl-1-phosphate (DK-MTP-1-P) into the intermediate 2-hydroxy-3-keto-5-methylthiopentenyl-1-phosphate (HK-MTPenyl-1-P), which is then dephosphorylated to form the acireductone 1,2-dihydroxy-3-keto-5-methylthiopentene (DHK-MTPene). The protein is Enolase-phosphatase E1 of Pseudomonas syringae pv. syringae (strain B728a).